Here is a 234-residue protein sequence, read N- to C-terminus: Purine nucleoside phosphorylase DeoD-type (234 aa).

A purine D-ribonucleoside is bound at residue His4. Phosphate contacts are provided by residues Gly20, Arg24, Arg43, and 87 to 90 (RIGS). A purine D-ribonucleoside-binding positions include Glu162, 179–181 (EME), and 203–204 (SD). Asp204 serves as the catalytic Proton donor.

The protein belongs to the PNP/UDP phosphorylase family. In terms of assembly, homohexamer; trimer of homodimers.

It catalyses the reaction a purine D-ribonucleoside + phosphate = a purine nucleobase + alpha-D-ribose 1-phosphate. The enzyme catalyses a purine 2'-deoxy-D-ribonucleoside + phosphate = a purine nucleobase + 2-deoxy-alpha-D-ribose 1-phosphate. Its function is as follows. Catalyzes the reversible phosphorolytic breakdown of the N-glycosidic bond in the beta-(deoxy)ribonucleoside molecules, with the formation of the corresponding free purine bases and pentose-1-phosphate. The polypeptide is Purine nucleoside phosphorylase DeoD-type (Roseobacter denitrificans (strain ATCC 33942 / OCh 114) (Erythrobacter sp. (strain OCh 114))).